The sequence spans 322 residues: Eukaryotic translation initiation factor 3 subunit I (322 aa).

5 WD repeats span residues 4 to 43 (GHERSITQIKYNREGDLLFSCSKDQKPNVWYSLNGERLGT), 46 to 85 (GHQGAVWCLDVDWETRKLITGAGDMTTKIWDVEYGTVIAS), 141 to 180 (MVESKITSMLWGPLDETIITGHDNGNIAIWDIRKGQKVVD), 184 to 223 (DHTAGINDMQLSKDGTMFVTASKDTTAKLFDSESLMCLKT), and 281 to 322 (GHFG…NIFE).

Belongs to the eIF-3 subunit I family. As to quaternary structure, component of the eukaryotic translation initiation factor 3 (eIF-3) complex. The eIF-3 complex interacts with pix.

The protein resides in the cytoplasm. In terms of biological role, component of the eukaryotic translation initiation factor 3 (eIF-3) complex, which is involved in protein synthesis of a specialized repertoire of mRNAs and, together with other initiation factors, stimulates binding of mRNA and methionyl-tRNAi to the 40S ribosome. The eIF-3 complex specifically targets and initiates translation of a subset of mRNAs involved in cell proliferation. The chain is Eukaryotic translation initiation factor 3 subunit I from Drosophila mojavensis (Fruit fly).